The primary structure comprises 318 residues: ADP-ribosyl cyclase/cyclic ADP-ribose hydrolase 2 (318 aa).

The signal sequence occupies residues 1 to 32; it reads MAAQGCAASRLLQLLLQLLLLLLLLAAGGARA. Disulfide bonds link cysteine 51–cysteine 67, cysteine 83–cysteine 163, and cysteine 144–cysteine 157. Asparagine 66 and asparagine 95 each carry an N-linked (GlcNAc...) asparagine glycan. Tryptophan 109 contacts NAD(+). Residue tryptophan 109 participates in nicotinamide binding. Asparagine 148 carries an N-linked (GlcNAc...) asparagine glycan. Tryptophan 172 serves as a coordination point for NAD(+). N-linked (GlcNAc...) asparagine glycosylation is present at asparagine 192. Glutamate 210 contributes to the NAD(+) binding site. 2 disulfide bridges follow: cysteine 238–cysteine 259 and cysteine 271–cysteine 280. Residue alanine 293 is the site of GPI-anchor amidated alanine attachment. A propeptide spans 294–318 (removed in mature form); that stretch reads PSLYTEQRAGLIIPLFLVLASRTQL.

It belongs to the ADP-ribosyl cyclase family. Homodimer. Expressed in various tissues including placenta, lung, liver and kidney.

The protein resides in the cell membrane. The catalysed reaction is NAD(+) + H2O = ADP-D-ribose + nicotinamide + H(+). The enzyme catalyses NAD(+) = cyclic ADP-beta-D-ribose + nicotinamide + H(+). It carries out the reaction cyclic ADP-beta-D-ribose + H2O = ADP-D-ribose. With respect to regulation, ADP-ribosyl cyclase and cADPR hydrolase activities are both activated by Zn(2+) or Mn(2+), and inhibited by Cu(2+), while Mg(2+) and Ca(2+) do not have any significant influence. Catalyzes both the synthesis of cyclic ADP-beta-D-ribose (cADPR) from NAD(+), and its hydrolysis to ADP-D-ribose (ADPR). Cyclic ADPR is known to serve as an endogenous second messenger that elicits calcium release from intracellular stores, and thus regulates the mobilization of intracellular calcium. May be involved in pre-B-cell growth. This chain is ADP-ribosyl cyclase/cyclic ADP-ribose hydrolase 2 (BST1), found in Homo sapiens (Human).